Here is a 2016-residue protein sequence, read N- to C-terminus: MNMPNERLKWLMLFAAVALIACGSQTLAANPPDADQKGPVFLKEPTNRIDFSNSTGAEIECKASGNPMPEIIWIRSDGTAVGDVPGLRQISSDGKLVFPPFRAEDYRQEVHAQVYACLARNQFGSIISRDVHVRAVVAQYYEADVNKEHVIRGNSAVIKCLIPSFVADFVEVVSWHTDEEENYFPGAEYDGKYLVLPSGELHIREVGPEDGYKSYQCRTKHRLTGETRLSATKGRLVITEPVSSSPPKINALTYKPNIVESMASTAILCPAQGYPAPSFRWYKFIEGTTRKQAVVLNDRVKQVSGTLIIKDAVVEDSGKYLCVVNNSVGGESVETVLTVTAPLSAKIDPPTQTVDFGRPAVFTCQYTGNPIKTVSWMKDGKAIGHSEPVLRIESVKKEDKGMYQCFVRNDQESAEASAELKLGGRFDPPVIRQAFQEETMEPGPSVFLKCVAGGNPTPEISWELDGKKIANNDRYQVGQYVTVNGDVVSYLNITSVHANDGGLYKCIAKSKVGVAEHSAKLNVYGLPYIRQMEKKAIVAGETLIVTCPVAGYPIDSIVWERDNRALPINRKQKVFPNGTLIIENVERNSDQATYTCVAKNQEGYSARGSLEVQVMVPPQVLPFSFGESAADVGDIASANCVVPKGDLPLEIRWSLNSAPIVNGENGFTLVRLNKRTSLLNIDSLNAFHRGVYKCIATNPAGTSEYVAELQVNVPPRWILEPTDKAFAQGSDAKVECKADGFPKPQVTWKKAVGDTPGEYKDLKKSDNIRVEEGTLHVDNIQKTNEGYYLCEAINGIGSGLSAVIMISVQAPPEFTEKLRNQTARRGEPAVLQCEAKGEKPIGILWNMNNMRLDPKNDNRYTIREEILSTGVMSSLSIKRTERSDSALFTCVATNAFGSDDASINMIVQEVPEMPYALKVLDKSGRSVQLSWAQPYDGNSPLDRYIIEFKRSRASWSEIDRVIVPGHTTEAQVQKLSPATTYNIRIVAENAIGTSQSSEAVTIITAEEAPSGKPQNIKVEPVNQTTMRVTWKPPPRTEWNGEILGYYVGYKLSNTNSSYVFETINFITEEGKEHNLELQNLRVYTQYSVVIQAFNKIGAGPLSEEEKQFTAEGTPSQPPSDTACTTLTSQTIRVGWVSPPLESANGVIKTYKVVYAPSDEWYDETKRHYKKTASSDTVLHGLKKYTNYTMQVLATTAGGDGVRSVPIHCQTEPDVPEAPTDVKALVMGNAAILVSWRPPAQPNGIITQYTVYSKAEGAETETKTQKVPHYQMSFEATELEKNKPYEFWVTASTTIGEGQQSKSIVAMPSDQVPAKIASFDDTFTATFKEDAKMPCLAVGAPQPEITWKIKGVEFSANDRMRVLPDGSLLIKSVNRQDAGDYSCHAENSIAKDSITHKLIVLAPPQSPHVTLSATTTDALTVKLKPHEGDTAPLHGYTLHYKPEFGEWETSEVSVDSQKHNIEGLLCGSRYQVYATGFNNIGAGEASDILNTRTKGQKPKLPEKPRFIEVSSNSVSLHFKAWKDGGCPMSHFVVESKKRDQIEWNQISNNVKPDNNYVVLDLEPATWYNLRITAHNSAGFTVAEYDFATLTVTGGTIAPSRDLPELSAEDTIRIILSNLNLVVPVVAALLVIIIAIIVICILRSKGNHHKDDVVYNQTMGPGATLDKRRPDLRDELGYIAPPNRKLPPVPGSNYNTCDRIKRGRGGLRSNHSTWDPRRNPNLYEELKAPPVPMHGNHYGHAHGNAECHYRHPGMEDEICPYATFHLLGFREEMDPTKAMNFQTFPHQNGHAGPVPGHAGTMLPPGHPGHVHSRSGSQSMPRANRYQRKNSQGGQSSIYTPAPEYDDPANCAEEDQYRRYTRVNSQGGSLYSGPGPEYDDPANCAPEEDQYGSQYGGPYGQPYDHYGSRGSMGRRSIGSARNPGNGSPEPPPPPPRNHDMSNSSFNDSKESNEISEAECDRDHGPRGNYGAVKRSPQPKDQRTTEEMRKLIERNETGPKQLQLQQANGAGFTAYDTMAV.

The signal sequence occupies residues 1–28; the sequence is MNMPNERLKWLMLFAAVALIACGSQTLA. Topologically, residues 29–1618 are extracellular; it reads ANPPDADQKG…TIRIILSNLN (1590 aa). Ig-like C2-type domains are found at residues 39–134, 138–230, 247–338, 342–421, 428–522, 527–613, 618–712, 715–807, and 812–904; these read PVFL…VHVR, AQYY…TRLS, PKIN…TVLT, PLSA…AELK, PPVI…AKLN, PYIR…LEVQ, PQVL…LQVN, PRWI…IMIS, and PEFT…ASIN. A glycan (N-linked (GlcNAc...) asparagine) is linked at N53. C61 and C117 are joined by a disulfide. Residues D144, N146, and L161 each contribute to the Zn(2+) site. 13 disulfide bridges follow: C160/C217, C160/T219, C160/K220, C269/C322, P270/V323, A276/G329, C364/C405, C450/C506, C547/C596, C640/C694, V641/C694, V641/I695, and C736/C790. A glycan (N-linked (GlcNAc...) asparagine) is linked at N325. N-linked (GlcNAc...) asparagine glycans are attached at residues N492 and N577. N820 carries an N-linked (GlcNAc...) asparagine glycan. C833 and C890 are oxidised to a cystine. Fibronectin type-III domains follow at residues 913 to 1007, 1012 to 1116, 1117 to 1213, and 1217 to 1310; these read MPYA…TAEE, KPQN…TPSQ, PPSD…TEPD, and APTD…PSDQ. N-linked (GlcNAc...) asparagine glycans are attached at residues N1022, N1055, and N1186. The Ig-like C2-type 10 domain occupies 1312-1394; it reads PAKIASFDDT…ENSIAKDSIT (83 aa). C1334 and C1382 form a disulfide bridge. Fibronectin type-III domains lie at 1402 to 1495 and 1499 to 1594; these read PPQS…TKGQ and LPEK…TGGT. Residues 1619–1639 form a helical membrane-spanning segment; it reads LVVPVVAALLVIIIAIIVICI. Topologically, residues 1640 to 2016 are cytoplasmic; that stretch reads LRSKGNHHKD…GFTAYDTMAV (377 aa). The PXXP motif 1; SH3-binding motif lies at 1685 to 1688; it reads PPVP. Positions 1688–1719 are disordered; that stretch reads PGSNYNTCDRIKRGRGGLRSNHSTWDPRRNPN. Positions 1727–1730 match the PXXP motif 2; SH3-binding motif; the sequence is PPVP. Disordered regions lie at residues 1787 to 1846 and 1862 to 2016; these read GHAG…DDPA and SQGG…TMAV. Positions 1826–1836 are enriched in polar residues; it reads KNSQGGQSSIY. Positions 1842–1845 match the YXXP motif 1; potential SH2-binding motif; that stretch reads YDDP. Positions 1875–1878 match the YXXP motif 2; potential SH2-binding motif; it reads YDDP. Positions 1897-1918 are enriched in low complexity; it reads GQPYDHYGSRGSMGRRSIGSAR. Positions 1925 to 1932 match the Polyproline tract (probable SH3-binding) motif; it reads PEPPPPPP. Composition is skewed to basic and acidic residues over residues 1944 to 1962 and 1974 to 1993; these read DSKE…DHGP and QPKD…RNET. The segment covering 1994–2004 has biased composition (polar residues); the sequence is GPKQLQLQQAN.

In terms of assembly, homodimer (via extracellular region); alternative splicing produces a potential 19,008 different ectodomains and the majority of these show strong isoform-specific homodimerization. Interacts (via cytoplasmic domain) with dock/dreadlocks (via SH2 and SH3 domains); the interaction is direct and may require Dscam1 to be phosphorylated. Post-translationally, phosphorylated on tyrosine residues in the intracellular domain. Tyrosine protein kinase Src42A and possibly Src64B are involved in this phosphorylation. Glycosylation on Asn-53 and Asn-325 is involved in stabilizing dimerization. In terms of processing, proteolytically processed, probably to generate a secreted form. Secreted into the hemolymph (at protein level). Expressed in brain and eye-antennal imaginal disks, including R3/R4 and R7 photoreceptor cells. Individual R3/R4 cells express between 14 and 50 randomly generated mRNAs encoding distinct isoforms.

The protein resides in the cell membrane. It localises to the cell projection. Its subcellular location is the neuron projection. The protein localises to the axon. It is found in the perikaryon. The protein resides in the dendrite. It localises to the secreted. Its function is as follows. Cell surface receptor involved in guidance and targeting of growing nerve axons. Required during Bolwig's organ differentiation for accurate and efficient targeting of photoreceptor neuron axons to their synaptic targets in the brain via the P2 intermediate target neuron. Involved in isoneural self-avoidance during dendrite arborization but not in heteroneural recognition and repulsion during tiling by related neurons of the same class. Involved in regulating axon bifurcation and divergent extension in the developing mushroom body. Essential for axon arborisation in ellipsoid body. Exhibits an extraordinary level of molecular diversity resulting from alternative splicing. Isoforms differing in their ectodomain makeup show a high degree of functional redundancy while isoforms with different transmembrane domains are involved in different neuronal morphogenetic processes and are differentially targeted to dendrites or axons. The vast majority of isoforms exhibit strong isoform-specific homophilic binding. Individual cells express a distinct randomly generated repertoire of isoforms. Cell surfaces bearing identical repertoires of Dscam1 isoforms, such as those from the same cell, trigger recognition and avoidance. A subset of isoforms is expressed in fat body cells and hemocytes, cells that are part of the insect immune response, and these isoforms are secreted into the hemolymph. The secreted form comprising the ectodomain can bind to bacteria, such as Escherichia coli, and may act as an opsonin enhancing their phagocytosis by hemocytes. The polypeptide is Cell adhesion molecule Dscam1 (Drosophila melanogaster (Fruit fly)).